Consider the following 370-residue polypeptide: Aminomethyltransferase (370 aa).

This sequence belongs to the GcvT family. The glycine cleavage system is composed of four proteins: P, T, L and H.

The enzyme catalyses N(6)-[(R)-S(8)-aminomethyldihydrolipoyl]-L-lysyl-[protein] + (6S)-5,6,7,8-tetrahydrofolate = N(6)-[(R)-dihydrolipoyl]-L-lysyl-[protein] + (6R)-5,10-methylene-5,6,7,8-tetrahydrofolate + NH4(+). The glycine cleavage system catalyzes the degradation of glycine. The polypeptide is Aminomethyltransferase (Stenotrophomonas maltophilia (strain R551-3)).